A 157-amino-acid polypeptide reads, in one-letter code: Endoribonuclease YbeY (157 aa).

Residues His-114, His-118, and His-124 each contribute to the Zn(2+) site.

The protein belongs to the endoribonuclease YbeY family. The cofactor is Zn(2+).

The protein resides in the cytoplasm. Single strand-specific metallo-endoribonuclease involved in late-stage 70S ribosome quality control and in maturation of the 3' terminus of the 16S rRNA. This chain is Endoribonuclease YbeY, found in Caulobacter vibrioides (strain ATCC 19089 / CIP 103742 / CB 15) (Caulobacter crescentus).